The following is a 338-amino-acid chain: Mitochondrial genome maintenance exonuclease 1 (338 aa).

A mitochondrion-targeting transit peptide spans 1 to 64; it reads MKLPLTFCRL…RSVLSRGPAQ (64 aa). Residues Asp235, Asp248, and Lys250 contribute to the active site.

Belongs to the MGME1 family.

The protein resides in the mitochondrion. Metal-dependent single-stranded DNA (ssDNA) exonuclease involved in mitochondrial genome maintenance. Has preference for 5'-3' exonuclease activity but is also capable of endonuclease activity on linear substrates. Necessary for maintenance of proper 7S DNA levels. Probably involved in mitochondrial DNA (mtDNA) repair, possibly via the processing of displaced DNA containing Okazaki fragments during RNA-primed DNA synthesis on the lagging strand or via processing of DNA flaps during long-patch base excision repair. Specifically binds 5-hydroxymethylcytosine (5hmC)-containing DNA in stem cells. The chain is Mitochondrial genome maintenance exonuclease 1 (Mgme1) from Mus musculus (Mouse).